A 99-amino-acid chain; its full sequence is Plastocyanin (99 aa).

Residues 1-99 (IEILLGGDDG…AGMVGKVTVN (99 aa)) enclose the Plastocyanin-like domain. Residues His-37, Cys-84, His-87, and Met-92 each contribute to the Cu cation site.

This sequence belongs to the plastocyanin family. The cofactor is Cu(2+).

Its subcellular location is the plastid. The protein resides in the chloroplast thylakoid membrane. Participates in electron transfer between P700 and the cytochrome b6-f complex in photosystem I. The sequence is that of Plastocyanin (PETE) from Cucumis sativus (Cucumber).